Consider the following 258-residue polypeptide: Tryptophan synthase alpha chain (258 aa).

Catalysis depends on proton acceptor residues E47 and D58.

It belongs to the TrpA family. Tetramer of two alpha and two beta chains.

It carries out the reaction (1S,2R)-1-C-(indol-3-yl)glycerol 3-phosphate + L-serine = D-glyceraldehyde 3-phosphate + L-tryptophan + H2O. Its pathway is amino-acid biosynthesis; L-tryptophan biosynthesis; L-tryptophan from chorismate: step 5/5. In terms of biological role, the alpha subunit is responsible for the aldol cleavage of indoleglycerol phosphate to indole and glyceraldehyde 3-phosphate. The chain is Tryptophan synthase alpha chain from Bacillus cereus (strain ATCC 14579 / DSM 31 / CCUG 7414 / JCM 2152 / NBRC 15305 / NCIMB 9373 / NCTC 2599 / NRRL B-3711).